The chain runs to 203 residues: Guanylate kinase (203 aa).

The Guanylate kinase-like domain occupies 3-181 (GTLYIVAAPS…AVSEMCAIFT (179 aa)). Residue 10–17 (APSGAGKS) coordinates ATP.

The protein belongs to the guanylate kinase family.

The protein localises to the cytoplasm. The catalysed reaction is GMP + ATP = GDP + ADP. Its function is as follows. Essential for recycling GMP and indirectly, cGMP. The protein is Guanylate kinase of Xanthomonas oryzae pv. oryzae (strain MAFF 311018).